Consider the following 255-residue polypeptide: DASH complex subunit SPC34 (255 aa).

The interval 53 to 81 is disordered; it reads LFSVPPPPPRQTTLTAEQQQQQKPSNRRQ. Positions 63 to 81 are enriched in polar residues; the sequence is QTTLTAEQQQQQKPSNRRQ. Residues 176–248 are a coiled coil; sequence LAYYEAKIAE…QARLRALDAD (73 aa).

It belongs to the DASH complex SPC34 family. As to quaternary structure, component of the DASH complex consisting of ASK1, DAD1, DAD2, DAD3, DAD4, DAM1, DUO1, HSK3, SPC19 and SPC34, with a stoichiometry of one copy of each subunit per complex. Multiple DASH complexes oligomerize to form a ring that encircles spindle microtubules and organizes the rod-like NDC80 complexes of the outer kinetochore of the outer kinetochore. DASH complex oligomerization strengthens microtubule attachments. On cytoplasmic microtubules, DASH complexes appear to form patches instead of rings.

Its subcellular location is the nucleus. It is found in the cytoplasm. The protein resides in the cytoskeleton. The protein localises to the spindle. It localises to the chromosome. Its subcellular location is the centromere. It is found in the kinetochore. In terms of biological role, component of the DASH complex that connects microtubules with kinetochores and couples microtubule depolymerisation to chromosome movement; it is involved in retrieving kinetochores to the spindle poles before their re-orientation on the spindle in early mitosis and allows microtubule depolymerization to pull chromosomes apart and resist detachment during anaphase. Kinetochores, consisting of a centromere-associated inner segment and a microtubule-contacting outer segment, play a crucial role in chromosome segregation by mediating the physical connection between centromeric DNA and microtubules. Kinetochores also serve as an input point for the spindle assembly checkpoint, which delays anaphase until all chromosomes have bioriented on the mitotic spindle. The protein is DASH complex subunit SPC34 of Chaetomium thermophilum (strain DSM 1495 / CBS 144.50 / IMI 039719) (Thermochaetoides thermophila).